The chain runs to 482 residues: Solute carrier family 49 member A3 (482 aa).

The next 12 membrane-spanning stretches (helical) occupy residues 41–61, 81–101, 109–129, 150–170, 181–201, 206–226, 264–284, 296–316, 330–350, 355–375, 390–410, and 437–457; these read WFVL…WISF, YLSL…SWLI, AIVF…GAIV, LCAI…SVWF, IASM…PSVV, YIAH…ILAT, VILM…SSFL, LFAG…AFVC, VKTC…VINF, VLVA…SPVG, SSTG…MILF, and TSML…IIFF.

It belongs to the major facilitator superfamily.

Its subcellular location is the membrane. In Xenopus tropicalis (Western clawed frog), this protein is Solute carrier family 49 member A3 (slc49a3).